The primary structure comprises 127 residues: Holo-[acyl-carrier-protein] synthase (127 aa).

The Mg(2+) site is built by Asp8 and Glu57.

It belongs to the P-Pant transferase superfamily. AcpS family. Requires Mg(2+) as cofactor.

It localises to the cytoplasm. It catalyses the reaction apo-[ACP] + CoA = holo-[ACP] + adenosine 3',5'-bisphosphate + H(+). Functionally, transfers the 4'-phosphopantetheine moiety from coenzyme A to a Ser of acyl-carrier-protein. In Ruthia magnifica subsp. Calyptogena magnifica, this protein is Holo-[acyl-carrier-protein] synthase.